We begin with the raw amino-acid sequence, 195 residues long: Imidazoleglycerol-phosphate dehydratase (195 aa).

Belongs to the imidazoleglycerol-phosphate dehydratase family.

Its subcellular location is the cytoplasm. The catalysed reaction is D-erythro-1-(imidazol-4-yl)glycerol 3-phosphate = 3-(imidazol-4-yl)-2-oxopropyl phosphate + H2O. The protein operates within amino-acid biosynthesis; L-histidine biosynthesis; L-histidine from 5-phospho-alpha-D-ribose 1-diphosphate: step 6/9. The sequence is that of Imidazoleglycerol-phosphate dehydratase from Azoarcus sp. (strain BH72).